We begin with the raw amino-acid sequence, 544 residues long: CTP synthase (544 aa).

The amidoligase domain stretch occupies residues 1-266; the sequence is MTKFIFVTGG…DDLICERFGL (266 aa). Residue Ser-13 coordinates CTP. Residue Ser-13 coordinates UTP. Residues 14-19 and Asp-71 each bind ATP; that span reads SLGKGI. Residues Asp-71 and Glu-140 each contribute to the Mg(2+) site. Residues 147–149, 187–192, and Lys-223 contribute to the CTP site; these read DIE and KTKPTQ. UTP is bound by residues 187-192 and Lys-223; that span reads KTKPTQ. The 253-residue stretch at 291 to 543 folds into the Glutamine amidotransferase type-1 domain; sequence TVAMVGKYVE…VKAAKNYSEA (253 aa). Position 354 (Gly-354) interacts with L-glutamine. Cys-381 serves as the catalytic Nucleophile; for glutamine hydrolysis. L-glutamine is bound by residues 382–385, Glu-404, and Arg-471; that span reads LGMQ. Catalysis depends on residues His-516 and Glu-518.

The protein belongs to the CTP synthase family. Homotetramer.

The catalysed reaction is UTP + L-glutamine + ATP + H2O = CTP + L-glutamate + ADP + phosphate + 2 H(+). It carries out the reaction L-glutamine + H2O = L-glutamate + NH4(+). It catalyses the reaction UTP + NH4(+) + ATP = CTP + ADP + phosphate + 2 H(+). The protein operates within pyrimidine metabolism; CTP biosynthesis via de novo pathway; CTP from UDP: step 2/2. With respect to regulation, allosterically activated by GTP, when glutamine is the substrate; GTP has no effect on the reaction when ammonia is the substrate. The allosteric effector GTP functions by stabilizing the protein conformation that binds the tetrahedral intermediate(s) formed during glutamine hydrolysis. Inhibited by the product CTP, via allosteric rather than competitive inhibition. Functionally, catalyzes the ATP-dependent amination of UTP to CTP with either L-glutamine or ammonia as the source of nitrogen. Regulates intracellular CTP levels through interactions with the four ribonucleotide triphosphates. The protein is CTP synthase of Psychrobacter arcticus (strain DSM 17307 / VKM B-2377 / 273-4).